The following is an 852-amino-acid chain: DNA mismatch repair protein MutS (852 aa).

G615–S622 is a binding site for ATP.

This sequence belongs to the DNA mismatch repair MutS family.

Its function is as follows. This protein is involved in the repair of mismatches in DNA. It is possible that it carries out the mismatch recognition step. This protein has a weak ATPase activity. The protein is DNA mismatch repair protein MutS of Thermodesulfovibrio yellowstonii (strain ATCC 51303 / DSM 11347 / YP87).